The following is a 565-amino-acid chain: NAD-dependent malic enzyme (565 aa).

Catalysis depends on Tyr-104, which acts as the Proton donor. An NAD(+)-binding site is contributed by Arg-157. Residue Lys-175 is the Proton acceptor of the active site. Glu-246, Asp-247, and Asp-270 together coordinate a divalent metal cation. 2 residues coordinate NAD(+): Asp-270 and Asn-418.

It belongs to the malic enzymes family. Homotetramer. The cofactor is Mg(2+). Mn(2+) serves as cofactor.

The enzyme catalyses (S)-malate + NAD(+) = pyruvate + CO2 + NADH. It carries out the reaction oxaloacetate + H(+) = pyruvate + CO2. The protein is NAD-dependent malic enzyme of Escherichia coli O127:H6 (strain E2348/69 / EPEC).